The following is a 649-amino-acid chain: Leucine-rich repeat transmembrane protein FLRT3 (649 aa).

The first 28 residues, 1-28 (MISAAWSIFLIGTKIGLFLQVAPLSVMA), serve as a signal peptide directing secretion. The 30-residue stretch at 29–58 (KSCPSVCRCDAGFIYCNDRFLTSIPTGIPE) folds into the LRRNT domain. At 29 to 528 (KSCPSVCRCD…KEPYKNPNLP (500 aa)) the chain is on the extracellular side. 2 disulfide bridges follow: Cys-31–Cys-37 and Cys-35–Cys-44. Residues 38 to 67 (DAGFIYCNDRFLTSIPTGIPEDATTLYLQN) are interaction with ADGRL3. 10 LRR repeats span residues 59 to 80 (DATTLYLQNNQINNAGIPSDLK), 84 to 104 (KVERIYLYHNSLDEFPTNLPK), 105 to 126 (YVKELHLQENNIRTITYDSLSK), 129 to 150 (YLEELHLDDNSVSAVSIEEGAF), 155 to 175 (YLRLLFLSRNHLSTIPWGLPR), 176 to 197 (TIEELRLDDNRISTISSPSLQG), 200 to 220 (SLKRLVLDGNLLNNHGLGDKV), 226 to 247 (NLTELSLVRNSLTAAPVNLPGT), 248 to 269 (NLRKLYLQDNHINRVPPNAFSY), and 272 to 293 (QLYRLDMSNNNLSNLPQGIFDD). Asn-226 is a glycosylation site (N-linked (GlcNAc...) asparagine). N-linked (GlcNAc...) asparagine glycosylation is found at Asn-282 and Asn-296. In terms of domain architecture, LRRCT spans 305–357 (NPWYCGCKMKWVRDWLQSLPVKVNVRGLMCQAPEKVRGMAIKDLNAELFDCKD). A disulfide bridge links Cys-309 with Cys-334. A disordered region spans residues 387-407 (KQPDIKNPKLTKDHQTTGSPS). Basic and acidic residues predominate over residues 389 to 401 (PDIKNPKLTKDHQ). The Fibronectin type-III domain occupies 409-504 (KTITITVKSV…VCIETETAPL (96 aa)). The helical transmembrane segment at 529–549 (LAAIIGGAVALVTIALLALVC) threads the bilayer. Residues 550 to 649 (WYVHRNGSLF…GIPDSDHSHS (100 aa)) are Cytoplasmic-facing. The tract at residues 622–649 (LYKNNHSESSSNRSYRDSGIPDSDHSHS) is disordered.

Monomer and homodimer. Self-associates (via leucine-rich repeats), giving rise to homooligomers. Interacts with FGFR1. Interacts (via extracellular domain) with ADGRL1/LPHN1 and LPHN2 (via olfactomedin-like domain). Interacts (via extracellular domain) with ADGRL3 (via olfactomedin-like domain); the interaction is direct. Interacts (via extracellular domain) with UNC5B and UNC5D (via extracellular domain); the interaction is direct. Identified in complexes composed of FLRT3, ADGRL3 and UNC5B, respectively FLRT3, ADGRL3 and UNC5D. May also interact (via extracellular domain) with UNC5A and UNC5C. Interacts (via cytoplasmic domain) with ROBO1. Post-translationally, N-glycosylated. In terms of processing, proteolytic cleavage in the juxtamembrane region gives rise to a soluble ectodomain. Cleavage is probably effected by a metalloprotease. In terms of tissue distribution, expressed in kidney, brain, pancreas, skeletal muscle, lung, liver, placenta, and heart.

Its subcellular location is the cell membrane. It is found in the presynaptic cell membrane. The protein localises to the endoplasmic reticulum membrane. It localises to the cell junction. The protein resides in the focal adhesion. Its subcellular location is the secreted. It is found in the cell projection. The protein localises to the axon. It localises to the growth cone membrane. Functions in cell-cell adhesion, cell migration and axon guidance, exerting an attractive or repulsive role depending on its interaction partners. Plays a role in the spatial organization of brain neurons. Plays a role in vascular development in the retina. Plays a role in cell-cell adhesion via its interaction with ADGRL3 and probably also other latrophilins that are expressed at the surface of adjacent cells. Interaction with the intracellular domain of ROBO1 mediates axon attraction towards cells expressing NTN1. Mediates axon growth cone collapse and plays a repulsive role in neuron guidance via its interaction with UNC5B, and possibly also other UNC-5 family members. Promotes neurite outgrowth (in vitro). Mediates cell-cell contacts that promote an increase both in neurite number and in neurite length. Plays a role in the regulation of the density of glutamaergic synapses. Plays a role in fibroblast growth factor-mediated signaling cascades. Required for normal morphogenesis during embryonic development, but not for normal embryonic patterning. Required for normal ventral closure, headfold fusion and definitive endoderm migration during embryonic development. Required for the formation of a normal basement membrane and the maintenance of a normal anterior visceral endoderm during embryonic development. This Homo sapiens (Human) protein is Leucine-rich repeat transmembrane protein FLRT3 (FLRT3).